The primary structure comprises 122 residues: Large ribosomal subunit protein uL14 (122 aa).

Belongs to the universal ribosomal protein uL14 family. As to quaternary structure, part of the 50S ribosomal subunit. Forms a cluster with proteins L3 and L19. In the 70S ribosome, L14 and L19 interact and together make contacts with the 16S rRNA in bridges B5 and B8.

Its function is as follows. Binds to 23S rRNA. Forms part of two intersubunit bridges in the 70S ribosome. The sequence is that of Large ribosomal subunit protein uL14 from Variovorax paradoxus (strain S110).